A 74-amino-acid chain; its full sequence is Translational regulator CsrA (74 aa).

Belongs to the CsrA/RsmA family. As to quaternary structure, homodimer; the beta-strands of each monomer intercalate to form a hydrophobic core, while the alpha-helices form wings that extend away from the core.

It localises to the cytoplasm. In terms of biological role, a translational regulator that binds mRNA to regulate translation initiation and/or mRNA stability. Usually binds in the 5'-UTR at or near the Shine-Dalgarno sequence preventing ribosome-binding, thus repressing translation. Its main target seems to be the major flagellin gene, while its function is anatagonized by FliW. The polypeptide is Translational regulator CsrA (Bacillus velezensis (strain DSM 23117 / BGSC 10A6 / LMG 26770 / FZB42) (Bacillus amyloliquefaciens subsp. plantarum)).